Consider the following 151-residue polypeptide: Aspartate carbamoyltransferase regulatory chain (151 aa).

4 residues coordinate Zn(2+): cysteine 108, cysteine 113, cysteine 138, and cysteine 141.

Belongs to the PyrI family. In terms of assembly, contains catalytic and regulatory chains. Zn(2+) is required as a cofactor.

Involved in allosteric regulation of aspartate carbamoyltransferase. The chain is Aspartate carbamoyltransferase regulatory chain from Pyrobaculum arsenaticum (strain DSM 13514 / JCM 11321 / PZ6).